A 379-amino-acid polypeptide reads, in one-letter code: Probable tRNA sulfurtransferase (379 aa).

One can recognise a THUMP domain in the interval 52–157 (DEFLDKLKFI…RHHAFVFCKI (106 aa)). ATP-binding positions include 175 to 176 (LL), Arg-257, Gly-279, and Gln-288.

This sequence belongs to the ThiI family.

Its subcellular location is the cytoplasm. It carries out the reaction [ThiI sulfur-carrier protein]-S-sulfanyl-L-cysteine + a uridine in tRNA + 2 reduced [2Fe-2S]-[ferredoxin] + ATP + H(+) = [ThiI sulfur-carrier protein]-L-cysteine + a 4-thiouridine in tRNA + 2 oxidized [2Fe-2S]-[ferredoxin] + AMP + diphosphate. The enzyme catalyses [ThiS sulfur-carrier protein]-C-terminal Gly-Gly-AMP + S-sulfanyl-L-cysteinyl-[cysteine desulfurase] + AH2 = [ThiS sulfur-carrier protein]-C-terminal-Gly-aminoethanethioate + L-cysteinyl-[cysteine desulfurase] + A + AMP + 2 H(+). The protein operates within cofactor biosynthesis; thiamine diphosphate biosynthesis. Functionally, catalyzes the ATP-dependent transfer of a sulfur to tRNA to produce 4-thiouridine in position 8 of tRNAs, which functions as a near-UV photosensor. Also catalyzes the transfer of sulfur to the sulfur carrier protein ThiS, forming ThiS-thiocarboxylate. This is a step in the synthesis of thiazole, in the thiamine biosynthesis pathway. The sulfur is donated as persulfide by IscS. This Mycoplasmopsis pulmonis (strain UAB CTIP) (Mycoplasma pulmonis) protein is Probable tRNA sulfurtransferase.